Reading from the N-terminus, the 162-residue chain is Caveolin-2 (162 aa).

The Cytoplasmic portion of the chain corresponds to 1–86 (MGLETEKADV…FEISKYVMYK (86 aa)). Y19 bears the Phosphotyrosine; by SRC mark. Residues S20 and S23 each carry the phosphoserine modification. A Phosphotyrosine; by SRC modification is found at Y27. At S36 the chain carries Phosphoserine. Positions 87 to 107 (FLTVFLAIPLAFIAGILFATL) form an intramembrane region, helical. Residues 108-162 (SCLHIWILMPFVKTCLMVLPSVQTIWKSVTDVIIAPLCTSVGRCFSSVSLQLSQD) lie on the Cytoplasmic side of the membrane.

This sequence belongs to the caveolin family. In terms of assembly, monomer or homodimer. Interacts with CAV1; the interaction forms a stable heterooligomeric complex that is required for targeting to lipid rafts and for caveolae formation. Tyrosine phosphorylated forms do not form heterooligomers with the Tyr-19-phosphorylated form existing as a monomer or dimer, and the Tyr-27-form as a monomer only. Interacts (tyrosine phosphorylated form) with the SH2 domain-containing proteins, RASA1, NCK1 and SRC. Interacts (tyrosine phosphorylated form) with INSR, the interaction (Tyr-27-phosphorylated form) is increased on insulin stimulation. Interacts (Tyr-19 phosphorylated form) with MAPK1 (phosphorylated form); the interaction, promoted by insulin, leads to nuclear location and MAPK1 activation. Interacts with STAT3; the interaction is increased on insulin-induced tyrosine phosphorylation leading to STAT activation. Phosphorylated on serine and tyrosine residues. CAV1 promotes phosphorylation on Ser-23 which then targets the complex to the plasma membrane, lipid rafts and caveolae. Phosphorylation on Ser-36 appears to modulate mitosis in endothelial cells. Phosphorylation on both Tyr-19 and Tyr-27 is required for insulin-induced 'Ser-727' phosphorylation of STAT3 and its activation. Phosphorylation on Tyr-19 is required for insulin-induced phosphorylation of MAPK1 and DNA binding of STAT3. Tyrosine phosphorylation is induced by both EGF and insulin (By. similarity).

The protein localises to the nucleus. It is found in the cytoplasm. It localises to the golgi apparatus membrane. Its subcellular location is the cell membrane. The protein resides in the membrane. The protein localises to the caveola. Functionally, may act as a scaffolding protein within caveolar membranes. Interacts directly with G-protein alpha subunits and can functionally regulate their activity. Acts as an accessory protein in conjunction with CAV1 in targeting to lipid rafts and driving caveolae formation. The Ser-36 phosphorylated form has a role in modulating mitosis in endothelial cells. Positive regulator of cellular mitogenesis of the MAPK signaling pathway. Required for the insulin-stimulated nuclear translocation and activation of MAPK1 and STAT3, and the subsequent regulation of cell cycle progression. This Pan troglodytes (Chimpanzee) protein is Caveolin-2 (CAV2).